We begin with the raw amino-acid sequence, 655 residues long: MAAIHINHDVFNKYHTNGKLRLTTGYVQEAIENNGYPGHDGIVQVLKGKVEQGEQLGHAFTFRIRISDGVFQYNALMSADIDDQIKREVEHLVEGTIIALTKFEIYDQGEGAKNCFLIKGYKILSRYHQVLTSPEVKPRSHSGKPDEHKGYRPNIIIEDVWPEAEGMAADYQENMANPPAAKAPKREFGEEASYNRAAAPEATRARAVPPPARRTASNTERGVMPIAMVTPYVSNFKIHGMVSRKEEIRTFPAKNTKVFNFEITDSNGDTIRCTAFNEVAESLYTTITENLSYYLSGGSVKQANKKFNNTGHDYEITLRSDSIIEAGGELLAAPKLILKRVKLGEIAGYAGQLIDVLVVVEKMDPEATEFTSKAGKSLIKREMELIDESGALVRLTLWGDEATKALVDDYVQKVIAFKGVIPREFNGGFSLGTGSATRIISVPEIAGVSELYDWYANVKPTTEVKMMSQAAGGSNEAPRTIAGLQEMQFGKDSDKGDYATVKAMITRVNPTNALYRGCASEGCQKKLVGENGDYRCEKCNKNMNKFKWLYMMQFELSDETGQVYVTAFGDSAAKIVGKSAAELGELHDESPDEYNAIFERLQFVPKMWRLRCKMDSYNEEVRQKMTVYGVDDVNQDKYIENLKQMIEQMQQMSDY.

Positions 195–217 (NRAAAPEATRARAVPPPARRTAS) are disordered. The span at 196 to 207 (RAAAPEATRARA) shows a compositional bias: low complexity. Residues 236–326 (FKIHGMVSRK…TLRSDSIIEA (91 aa)) constitute a DNA-binding region (OB). The segment at 518–539 (CASEGCQKKLVGENGDYRCEKC) adopts a C4-type zinc-finger fold.

Belongs to the replication factor A protein 1 family. In terms of assembly, component of the heterotrimeric canonical replication protein A complex (RPA).

The protein resides in the nucleus. Its function is as follows. As part of the heterotrimeric replication protein A complex (RPA/RP-A), binds and stabilizes single-stranded DNA intermediates, that form during DNA replication or upon DNA stress. It prevents their reannealing and in parallel, recruits and activates different proteins and complexes involved in DNA metabolism. Thereby, it plays an essential role both in DNA replication and the cellular response to DNA damage. In Caenorhabditis elegans, this protein is Probable replication factor A 73 kDa subunit.